Reading from the N-terminus, the 206-residue chain is Ras-related protein Rab-18 (206 aa).

Methionine 1 is modified (N-acetylmethionine). Residues serine 17, glycine 20, lysine 21, serine 22, serine 23, aspartate 34, proline 35, threonine 40, glycine 66, lysine 123, and aspartate 125 each coordinate GTP. Serine 22 contributes to the Mg(2+) binding site. 2 consecutive short sequence motifs (switch) follow at residues 31–45 (DTFD…GVDF) and 63–80 (DTAG…YYRG). Threonine 40 contacts Mg(2+). Serine 144 is subject to Phosphoserine. Alanine 152 is a binding site for GTP. Cysteine 199 carries S-palmitoyl cysteine lipidation. Cysteine 203 bears the Cysteine methyl ester mark. The S-geranylgeranyl cysteine moiety is linked to residue cysteine 203. Residues 204–206 (SVL) constitute a propeptide, removed in mature form.

It belongs to the small GTPase superfamily. Rab family. Interacts (in GTP-bound form) with ZFYVE1. Interacts with ZW10 and this interaction is enhanced in the presence of ZFYVE1. Interacts with BSCL2. The cofactor is Mg(2+).

It is found in the endoplasmic reticulum membrane. Its subcellular location is the golgi apparatus. It localises to the cis-Golgi network membrane. The protein resides in the lipid droplet. The protein localises to the apical cell membrane. The enzyme catalyses GTP + H2O = GDP + phosphate + H(+). Its activity is regulated as follows. Regulated by guanine nucleotide exchange factors (GEFs) which promote the exchange of bound GDP for free GTP. Regulated by GTPase activating proteins (GAPs) which increase the GTP hydrolysis activity at the ER membrane. Inhibited by GDP dissociation inhibitors (GDIs) which prevent Rab-GDP dissociation. Functionally, the small GTPases Rab are key regulators of intracellular membrane trafficking, from the formation of transport vesicles to their fusion with membranes. Rabs cycle between an inactive GDP-bound form and an active GTP-bound form that is able to recruit to membranes different sets of downstream effectors directly responsible for vesicle formation, movement, tethering and fusion. RAB18 is required for the localization of ZFYVE1 to lipid droplets and for its function in mediating the formation of endoplasmic reticulum-lipid droplets (ER-LD) contacts. Also required for maintaining endoplasmic reticulum structure. Plays a role in apical endocytosis/recycling. Plays a key role in eye and brain development and neurodegeneration. The polypeptide is Ras-related protein Rab-18 (RAB18) (Bos taurus (Bovine)).